Here is a 308-residue protein sequence, read N- to C-terminus: MDRLLRLGGAMPQAAPPTDAPVVDTAEQVYISSLALLKMLKHGRAGVPMEVMGLMLGEFVDDYTVQVIDVFAMPQTGTGVSVEAVDPVFQAKMLDMLKQTGRPEMVVGWYHSHPGFGCWLSGVDINTQQSFEALSERAVAVVVDPIQSVKGKVVIDAFRLINPNMLVLGQEPRQTTSNLGHLQKPSVQALIHGLNRHYYSISINYRKNELEQKMLLNLHKKSWKDGLTLSDYNEHCSINEDTVAEMLDLAKNYNKSLEDEEKMTPEQLAIKNVGKQDPKRHLEEKVDKVMQNNIVQCLGAMLDTIVFK.

The 136-residue stretch at 29 to 164 (VYISSLALLK…IDAFRLINPN (136 aa)) folds into the MPN domain. 3 residues coordinate Zn(2+): H111, H113, and D124. Positions 111–124 (HSHPGFGCWLSGVD) match the JAMM motif motif.

The protein belongs to the peptidase M67A family. PSMD14 subfamily. As to quaternary structure, component of the 19S regulatory cap of the 26S proteasome.

Its function is as follows. Metalloprotease component of the 26S proteasome that specifically cleaves 'Lys-63'-linked polyubiquitin chains. The 26S proteasome is involved in the ATP-dependent degradation of ubiquitinated proteins. The function of the 'Lys-63'-specific deubiquitination of the proteasome is unclear. The chain is 26S proteasome non-ATPase regulatory subunit 14 (Rpn11) from Drosophila melanogaster (Fruit fly).